The chain runs to 502 residues: Hexokinase-4 (502 aa).

Residues 4 to 24 form a helical membrane-spanning segment; it reads VLVMLTAAAAVVACSVATVMV. A Hexokinase domain is found at 35–491; sequence RRVVGLLKDL…SSIGSALLLA (457 aa). The interval 90-228 is hexokinase small subdomain; that stretch reads NGSETGTYYA…GLDIRVAALV (139 aa). Gly104 and Ser105 together coordinate ADP. D-glucose contacts are provided by Thr194, Lys195, Asn229, and Asp230. Residues 229-480 are hexokinase large subdomain; that stretch reads NDTVGALSFG…QHVVVKAMED (252 aa). Thr253 provides a ligand contact to ADP. D-glucose-binding residues include Asn256, Glu284, and Glu315. Gly445 lines the ADP pocket.

Belongs to the hexokinase family.

The protein resides in the mitochondrion outer membrane. The catalysed reaction is a D-hexose + ATP = a D-hexose 6-phosphate + ADP + H(+). The enzyme catalyses D-fructose + ATP = D-fructose 6-phosphate + ADP + H(+). It catalyses the reaction D-glucose + ATP = D-glucose 6-phosphate + ADP + H(+). The protein operates within carbohydrate metabolism; hexose metabolism. It functions in the pathway carbohydrate degradation; glycolysis; D-glyceraldehyde 3-phosphate and glycerone phosphate from D-glucose: step 1/4. Fructose and glucose phosphorylating enzyme. May be involved in the phosphorylation of glucose during the export from mitochondrion to cytosol. This is Hexokinase-4 from Arabidopsis thaliana (Mouse-ear cress).